Here is a 443-residue protein sequence, read N- to C-terminus: UDP-N-acetylmuramoylalanine--D-glutamate ligase (443 aa).

116-122 is an ATP binding site; the sequence is GTNGKST.

The protein belongs to the MurCDEF family.

The protein localises to the cytoplasm. It catalyses the reaction UDP-N-acetyl-alpha-D-muramoyl-L-alanine + D-glutamate + ATP = UDP-N-acetyl-alpha-D-muramoyl-L-alanyl-D-glutamate + ADP + phosphate + H(+). The protein operates within cell wall biogenesis; peptidoglycan biosynthesis. Functionally, cell wall formation. Catalyzes the addition of glutamate to the nucleotide precursor UDP-N-acetylmuramoyl-L-alanine (UMA). In Novosphingobium aromaticivorans (strain ATCC 700278 / DSM 12444 / CCUG 56034 / CIP 105152 / NBRC 16084 / F199), this protein is UDP-N-acetylmuramoylalanine--D-glutamate ligase.